The sequence spans 75 residues: Small ribosomal subunit protein bS18 (75 aa).

Belongs to the bacterial ribosomal protein bS18 family. Part of the 30S ribosomal subunit. Forms a tight heterodimer with protein bS6.

Binds as a heterodimer with protein bS6 to the central domain of the 16S rRNA, where it helps stabilize the platform of the 30S subunit. This chain is Small ribosomal subunit protein bS18, found in Cellvibrio japonicus (strain Ueda107) (Pseudomonas fluorescens subsp. cellulosa).